The sequence spans 416 residues: Tyrosine--tRNA ligase (416 aa).

Tyr40 lines the L-tyrosine pocket. A 'HIGH' region motif is present at residues 45 to 54 (ATAASLHVGH). L-tyrosine is bound by residues Tyr177 and Gln181. A 'KMSKS' region motif is present at residues 237–241 (KMGKS). Lys240 contributes to the ATP binding site. The S4 RNA-binding domain occupies 351-416 (LSVAHFLVAA…RKKHKLVRLS (66 aa)).

It belongs to the class-I aminoacyl-tRNA synthetase family. TyrS type 1 subfamily. As to quaternary structure, homodimer.

The protein resides in the cytoplasm. The catalysed reaction is tRNA(Tyr) + L-tyrosine + ATP = L-tyrosyl-tRNA(Tyr) + AMP + diphosphate + H(+). Its function is as follows. Catalyzes the attachment of tyrosine to tRNA(Tyr) in a two-step reaction: tyrosine is first activated by ATP to form Tyr-AMP and then transferred to the acceptor end of tRNA(Tyr). The chain is Tyrosine--tRNA ligase from Cereibacter sphaeroides (strain KD131 / KCTC 12085) (Rhodobacter sphaeroides).